The following is a 218-amino-acid chain: Probable WRKY transcription factor 12 (218 aa).

The segment covering 49–63 has biased composition (low complexity); that stretch reads SSLSSPSFPIHNSSS. Disordered stretches follow at residues 49 to 120 and 199 to 218; these read SSLS…DMKN and HNHI…LSSF. Polar residues predominate over residues 64-77; that stretch reads TTTTHAPLGFSNNL. The segment covering 105–116 has biased composition (low complexity); the sequence is SNSWWRSNSGSG. The segment at residues 139–204 is a DNA-binding region (WRKY); sequence SDVDVLDDGY…YEGRHNHIPS (66 aa).

The protein belongs to the WRKY group II-c family.

It localises to the nucleus. In terms of biological role, transcription factor. Interacts specifically with the W box (5'-(T)TGAC[CT]-3'), a frequently occurring elicitor-responsive cis-acting element. This is Probable WRKY transcription factor 12 (WRKY12) from Arabidopsis thaliana (Mouse-ear cress).